Reading from the N-terminus, the 651-residue chain is Histone-arginine methyltransferase CARM1 (651 aa).

Residues 28 to 139 are interaction with C9orf72; it reads ATVSVFPGAR…GHTLERSVFS (112 aa). Residues 147–454 enclose the SAM-dependent MTase PRMT-type domain; sequence AVQYFQFYGY…KRQSYDISIV (308 aa). Positions 160, 169, 193, and 215 each coordinate S-adenosyl-L-methionine. Residue Ser-217 is modified to Phosphoserine. Lys-228 is covalently cross-linked (Glycyl lysine isopeptide (Lys-Gly) (interchain with G-Cter in ubiquitin)). Residues Glu-244 and Ser-272 each contribute to the S-adenosyl-L-methionine site. Residues 347–380 form a required for nuclear translocation region; sequence RILMAKSVKYTVNFLEAKEGDLHRIEIPFKFHML. The interval 500–651 is transactivation domain; it reads TGSTYNLSSG…IPTNTMHYGS (152 aa). Dimethylated arginine is present on Arg-551. The segment at 581–617 is disordered; sequence RSSYQWGPGRLRGHAGSSVPMTCPTGSSGAQGGGGSS.

This sequence belongs to the class I-like SAM-binding methyltransferase superfamily. Protein arginine N-methyltransferase family. Homodimer. Interacts with NR1H4. Interacts with SNRPC. Interacts with the C-terminus of NCOA2/GRIP1, NCO3/ACTR and NCOA1/SRC1. Part of a complex consisting of CARM1, EP300/P300 and NCOA2/GRIP1. Interacts with FLII, TP53, myogenic factor MEF2, EP300/P300, TRIM24, CREBBP and CTNNB1. Interacts with RELA. Identified in a complex containing CARM1, TRIM24 and NCOA2/GRIP1. Interacts with NCOA3/SRC3. Interacts with SKP2. Interacts (via PH domain-like fold) with C9orf72. Interacts with PARP1; promoting PARP1 recruimtent to replication forks. Post-translationally, auto-methylated on Arg-551. Methylation enhances transcription coactivator activity. Methylation is required for its role in the regulation of pre-mRNA alternative splicing. Phosphorylation at Ser-217 interferes with S-adenosyl-L-methionine binding and strongly reduces methyltransferase activity. Phosphorylation at Ser-217 is strongly increased during mitosis, and decreases rapidly to a very low, basal level after entry into the G1 phase of the cell cycle. Phosphorylation at Ser-217 may promote location in the cytosol. In terms of processing, ubiquitinated by E3 ubiquitin-protein ligase complex containing FBXO9 at Lys-228; leading to proteasomal degradation. As to expression, isoform 1 is expressed at low levels in brain, liver and testis. Isoform 2 is highly expressed in brain, liver, skeletal muscle and testis. In terms of tissue distribution, isoform 3 is highly expressed in spleen, liver and kidney. As to expression, isoform 4 is expressed in spleen, liver and kidney.

The protein resides in the nucleus. The protein localises to the cytoplasm. It localises to the chromosome. It carries out the reaction L-arginyl-[protein] + 2 S-adenosyl-L-methionine = N(omega),N(omega)-dimethyl-L-arginyl-[protein] + 2 S-adenosyl-L-homocysteine + 2 H(+). Methylation of H3R17 (H3R17me) by CARM1 is stimulated by preacetylation of H3 'Lys-18' (H3K18ac) H3 'Lys-23' (H3K23ac) by EP300 and blocked by citrullination of H3 'Arg-17' (H3R17ci) by PADI4. Methylates (mono- and asymmetric dimethylation) the guanidino nitrogens of arginyl residues in several proteins involved in DNA packaging, transcription regulation, pre-mRNA splicing, and mRNA stability. Recruited to promoters upon gene activation together with histone acetyltransferases from EP300/P300 and p160 families, methylates histone H3 at 'Arg-17' (H3R17me), forming mainly asymmetric dimethylarginine (H3R17me2a), leading to activation of transcription via chromatin remodeling. During nuclear hormone receptor activation and TCF7L2/TCF4 activation, acts synergically with EP300/P300 and either one of the p160 histone acetyltransferases NCOA1/SRC1, NCOA2/GRIP1 and NCOA3/ACTR or CTNNB1/beta-catenin to activate transcription. During myogenic transcriptional activation, acts together with NCOA3/ACTR as a coactivator for MEF2C. During monocyte inflammatory stimulation, acts together with EP300/P300 as a coactivator for NF-kappa-B. Acts as a coactivator for PPARG, promotes adipocyte differentiation and the accumulation of brown fat tissue. Plays a role in the regulation of pre-mRNA alternative splicing by methylation of splicing factors. Also seems to be involved in p53/TP53 transcriptional activation. Methylates EP300/P300, both at 'Arg-2142', which may loosen its interaction with NCOA2/GRIP1, and at 'Arg-580' and 'Arg-604' in the KIX domain, which impairs its interaction with CREB and inhibits CREB-dependent transcriptional activation. Also methylates arginine residues in RNA-binding proteins PABPC1, ELAVL1 and ELAV4, which may affect their mRNA-stabilizing properties and the half-life of their target mRNAs. Acts as a transcriptional coactivator of ACACA/acetyl-CoA carboxylase by enriching H3R17 methylation at its promoter, thereby positively regulating fatty acid synthesis. Independently of its methyltransferase activity, involved in replication fork progression: promotes PARP1 recruitment to replication forks, leading to poly-ADP-ribosylation of chromatin at replication forks and reduced fork speed. Its function is as follows. Isoform 3 specifically affects pre-mRNA splicing. This activity is independent from methyltransferase activity. The chain is Histone-arginine methyltransferase CARM1 (Carm1) from Rattus norvegicus (Rat).